Reading from the N-terminus, the 94-residue chain is Selenoprotein K (94 aa).

Residues 20–42 form a helical membrane-spanning segment; sequence LSFLTDFFWGAVEFIGLFFQTLV. The interval 48 to 94 is disordered; the sequence is KDGNNSASSRFSDGRGPPGFPGRRRMGRINHGAGPTPPPMGGGGUGR. The segment covering 49–58 has biased composition (polar residues); sequence DGNNSASSRF. Position 92 (Sec92) is a non-standard amino acid, selenocysteine.

This sequence belongs to the selenoprotein K family.

It is found in the endoplasmic reticulum membrane. The protein localises to the cell membrane. Its function is as follows. Required for Ca(2+) flux in immune cells and plays a role in T-cell proliferation and in T-cell and neutrophil migration. Involved in endoplasmic reticulum-associated degradation (ERAD) of soluble glycosylated proteins. Required for cell surface expression of CD36 and involved in macrophage uptake of low-density lipoprotein and in foam cell formation. Required for palmitoylation. This is Selenoprotein K (selenok) from Danio rerio (Zebrafish).